Reading from the N-terminus, the 197-residue chain is uncharacterized protein (197 aa).

The helical transmembrane segment at Pro7 to Ile27 threads the bilayer.

Belongs to the IIV-6 307L family.

Its subcellular location is the membrane. This is an uncharacterized protein from Acheta domesticus (House cricket).